Here is a 336-residue protein sequence, read N- to C-terminus: Plant-specific TFIIB-related protein 2 (336 aa).

The TFIIB-type zinc finger occupies 2-34 (EEETCLDCKRPTIMVVDHSSGDTICSECGLVLE). 4 residues coordinate Zn(2+): Cys6, Cys9, Cys26, and Cys29.

In terms of tissue distribution, specifically expressed in reproductive organs and seeds.

The protein localises to the nucleus. Functionally, plant-specific TFIIB-related protein involved in the regulation of endosperm proliferation during the syncytial phase of endosperm development. Does not contribute to RNA polymerase IV or V activities in reproductive tissues. The chain is Plant-specific TFIIB-related protein 2 from Arabidopsis thaliana (Mouse-ear cress).